The following is an 80-amino-acid chain: Phage shock protein G (80 aa).

The next 2 helical transmembrane spans lie at 5-25 and 41-61; these read LFVI…LGII and LALM…VWVI.

Its subcellular location is the cell inner membrane. In terms of biological role, effector of the phage shock response. This is Phage shock protein G (pspG) from Escherichia coli (strain K12).